A 115-amino-acid polypeptide reads, in one-letter code: Large ribosomal subunit protein bL19 (115 aa).

It belongs to the bacterial ribosomal protein bL19 family.

In terms of biological role, this protein is located at the 30S-50S ribosomal subunit interface and may play a role in the structure and function of the aminoacyl-tRNA binding site. This Latilactobacillus sakei subsp. sakei (strain 23K) (Lactobacillus sakei subsp. sakei) protein is Large ribosomal subunit protein bL19.